Reading from the N-terminus, the 541-residue chain is Zinc finger CCHC domain-containing protein 7 (541 aa).

A disordered region spans residues 111-144; the sequence is AEEKTQSPATSHSNKVAQKCKRNNKKPKPEERPG. Residues 116-126 are compositionally biased toward polar residues; that stretch reads QSPATSHSNKV. Residues K129, K136, K138, K234, and K249 each participate in a glycyl lysine isopeptide (Lys-Gly) (interchain with G-Cter in SUMO2) cross-link. CCHC-type zinc fingers lie at residues 236–253, 258–275, and 299–316; these read VTCRNCDKRGHLSKNCPL, RACCLCSERGHLQYGCPA, and KRCDRCDMIGHHADACPE. A Glycyl lysine isopeptide (Lys-Gly) (interchain with G-Cter in SUMO2) cross-link involves residue K334. Residues 343-360 form a CCHC-type 4 zinc finger; the sequence is VYCYNCAQKGHYGHECTE. A disordered region spans residues 394 to 541; sequence VKDLKKNGDF…KKKKPKPSGL (148 aa). Glycyl lysine isopeptide (Lys-Gly) (interchain with G-Cter in SUMO2) cross-links involve residues K408 and K431. Residues 418-434 are compositionally biased toward basic residues; the sequence is RRHHDMRKSRSPRKYRR. Over residues 435-452 the composition is skewed to basic and acidic residues; sequence WPRENKETQKEKTRSREG. Residue K473 forms a Glycyl lysine isopeptide (Lys-Gly) (interchain with G-Cter in SUMO2) linkage. Residues 474 to 486 are compositionally biased toward polar residues; it reads PNASGCANNQKPS. The residue at position 477 (S477) is a Phosphoserine. Glycyl lysine isopeptide (Lys-Gly) (interchain with G-Cter in SUMO2) cross-links involve residues K484 and K487. Residues 487-497 show a composition bias toward basic residues; that stretch reads KSLHHASHYHR. Composition is skewed to basic and acidic residues over residues 498–509 and 517–527; these read LREERLLRESKR and STEDGSHDDLF. Residue K530 forms a Glycyl lysine isopeptide (Lys-Gly) (interchain with G-Cter in SUMO2) linkage. A compositionally biased stretch (basic residues) spans 530–541; it reads KQKKKKPKPSGL.

As to quaternary structure, component of a nucleolar TRAMP-like complex, an ATP-dependent exosome regulatory complex consisting of a helicase (MTREX), an oligadenylate polymerase (TENT4B or TENT4A), and a substrate specific RNA-binding factor (ZCCHC7 or ZCCHC8). Several TRAMP-like complexes exist with specific compositions and are associated with nuclear, or nucleolar RNA exosomes.

It localises to the nucleus. The protein resides in the nucleolus. This Mus musculus (Mouse) protein is Zinc finger CCHC domain-containing protein 7 (Zcchc7).